A 134-amino-acid chain; its full sequence is Profilin-3 (134 aa).

Cys-13 and Cys-118 form a disulfide bridge. Positions 84 to 100 match the Involved in PIP2 interaction motif; sequence AVIRGKKGSGGITIKKT. Thr-114 carries the phosphothreonine modification.

This sequence belongs to the profilin family. As to quaternary structure, occurs in many kinds of cells as a complex with monomeric actin in a 1:1 ratio. Post-translationally, phosphorylated by MAP kinases.

The protein localises to the cytoplasm. It localises to the cytoskeleton. Its function is as follows. Binds to actin and affects the structure of the cytoskeleton. At high concentrations, profilin prevents the polymerization of actin, whereas it enhances it at low concentrations. This chain is Profilin-3, found in Olea europaea (Common olive).